Reading from the N-terminus, the 212-residue chain is MAHRETNGSKLFITVLCMVAACSAVPINDLLDRASQRSDMLHSLSTTLTKDLSNHVPPVGWTMMPRPPLCHTSSLQTPNDKEQALQLSESDLMSLARSLLQAWQDPLVDLSNSANSLLHPSQSSISNKIRELQEHSKSLGDGLDILSGKMGPAAQAISSLPYRGSNDIGEDNISKLTNFHFLLSCFRRDSHKIDSFLKVLRCRAAKVQPEMC.

The first 24 residues, Met1–Ala24, serve as a signal peptide directing secretion. 2 disulfide bridges follow: Cys70/Cys185 and Cys202/Cys212.

This sequence belongs to the somatotropin/prolactin family.

It localises to the secreted. The sequence is that of Prolactin (prl) from Sparus aurata (Gilthead sea bream).